The sequence spans 59 residues: MRFRIRKCPNCGRYTLKEICPVCGAKTKVAHPPRFSPEDPYGEYRRRWKREVLGIEVRK.

This sequence belongs to the NOP10 family.

In terms of biological role, involved in ribosome biogenesis; more specifically in 18S rRNA pseudouridylation and in cleavage of pre-rRNA. This Thermococcus gammatolerans (strain DSM 15229 / JCM 11827 / EJ3) protein is Ribosome biogenesis protein Nop10.